The following is an 82-amino-acid chain: Large ribosomal subunit protein bL31 (82 aa).

Residues C16, C18, C37, and C40 each contribute to the Zn(2+) site.

This sequence belongs to the bacterial ribosomal protein bL31 family. Type A subfamily. As to quaternary structure, part of the 50S ribosomal subunit. Requires Zn(2+) as cofactor.

Binds the 23S rRNA. The chain is Large ribosomal subunit protein bL31 from Blochmanniella pennsylvanica (strain BPEN).